A 1113-amino-acid polypeptide reads, in one-letter code: Protein KIBRA (1113 aa).

WW domains follow at residues 6-39 and 53-86; these read LPLP…DPRD and DELP…DPRV. Coiled-coil stretches lie at residues 107–193 and 293–431; these read LSAQ…RGFQ and NSNN…SSMQ. Ser141 is modified (phosphoserine). Disordered stretches follow at residues 429–448 and 522–547; these read SMQS…SRGS and RSLS…SPPC. Residues 522–532 are compositionally biased toward polar residues; the sequence is RSLSGTPKSMT. Low complexity predominate over residues 533-542; sequence SLSPRSSLSS. Phosphoserine is present on Ser535. Residue Ser542 is modified to Phosphoserine; by CDK1. The C2 domain occupies 658-781; sequence GATRIQIALK…RSGERSTRWY (124 aa). A disordered region spans residues 825–975; that stretch reads LEKRQEGRSS…RSVRMKRPSS (151 aa). The segment at 839–1113 is interaction with histone H3; sequence EDSWRYEETS…NIPALSADDV (275 aa). Over residues 847-870 the composition is skewed to acidic residues; it reads TSENEAVAEEEEEEVEEEEGEEDV. Residue Ser899 is modified to Phosphoserine. Residue Thr912 is modified to Phosphothreonine. Positions 924-938 are enriched in polar residues; sequence IIRSKTFSPGPQSQY. Ser927 is modified (phosphoserine). A Phosphothreonine modification is found at Thr929. At Ser931 the chain carries Phosphoserine; by CDK1. The residue at position 947 (Ser947) is a Phosphoserine. Interaction with PRKCZ regions lie at residues 953–996 and 956–975; these read SKKP…LDLQ and PPFV…RPSS. Phosphoserine; by PKC/PRKCZ is present on residues Ser975 and Ser978. The stretch at 1001–1032 forms a coiled coil; that stretch reads WHSQLTQEISVLKELKEQLEQAKSHGEKELPQ. Positions 1111–1113 match the ADDV motif motif; it reads DDV.

This sequence belongs to the WWC family. KIBRA subfamily. In terms of assembly, homodimer. Forms heterodimers with WWC2 and WWC3. Interacts with DDN. Interacts with DYNLL1 and histone H3. The interaction with DYNLL1 is mandatory for the recruitment and transactivation functions of ESR1 or DYNLL1 to the target chromatin and the interaction with histone H3 ensures proper regulatory interaction of WWC1-DYNLL1-ESR1 complexes with target chromatin. Interacts (via WW domains) with DDR1 (via PPxY motif) in a collagen-regulated manner. Interacts with PRKCZ (via the protein kinase domain). Forms a tripartite complex with DDR1 and PRKCZ, but predominantly in the absence of collagen. Interacts (via the ADDV motif) with PATJ (via PDZ domain 8). Interacts (via WW domains) with SYNPO (via PPxY motifs). Interacts with NF2 and SNX4. Interacts with DLC1 and PRKCZ. Interacts (via WW domains) with LATS1 and LATS2. In terms of processing, phosphorylation at Ser-542 and Ser-931 by CDK1 in response to spindle damage stress regulates mitotic exit, these two sites are dephosphorylated by CDC14B. As to expression, expressed in mammary epithelial cells and breast cancer cell lines. Found in the luminal epithelium surrounding the ducts in the normal breast. In the brain, expressed in somatodendritic compartment of neurons in the cortex and hippocampus and in the cerebellum it is found in the Purkinje cells and some granule cells (at protein level). Detected in brain, heart, colon and kidney. In the kidney, expressed in glomerular podocytes, in some tubules and in the collecting duct.

The protein localises to the cytoplasm. Its subcellular location is the perinuclear region. It localises to the nucleus. The protein resides in the cell projection. It is found in the ruffle membrane. The protein localises to the cytosol. Regulator of the Hippo signaling pathway, also known as the Salvador-Warts-Hippo (SWH) pathway. Enhances phosphorylation of LATS1 and YAP1 and negatively regulates cell proliferation and organ growth due to a suppression of the transcriptional activity of YAP1, the major effector of the Hippo pathway. Along with NF2 can synergistically induce the phosphorylation of LATS1 and LATS2 and function in the regulation of Hippo signaling pathway. Acts as a transcriptional coactivator of ESR1 which plays an essential role in DYNLL1-mediated ESR1 transactivation. Regulates collagen-stimulated activation of the ERK/MAPK cascade. Modulates directional migration of podocytes. Plays a role in cognition and memory performance. Plays an important role in regulating AMPA-selective glutamate receptors (AMPARs) trafficking underlying synaptic plasticity and learning. The polypeptide is Protein KIBRA (Homo sapiens (Human)).